The sequence spans 389 residues: Lipid-A-disaccharide synthase (389 aa).

It belongs to the LpxB family.

It catalyses the reaction a lipid X + a UDP-2-N,3-O-bis[(3R)-3-hydroxyacyl]-alpha-D-glucosamine = a lipid A disaccharide + UDP + H(+). Its pathway is bacterial outer membrane biogenesis; LPS lipid A biosynthesis. Functionally, condensation of UDP-2,3-diacylglucosamine and 2,3-diacylglucosamine-1-phosphate to form lipid A disaccharide, a precursor of lipid A, a phosphorylated glycolipid that anchors the lipopolysaccharide to the outer membrane of the cell. The polypeptide is Lipid-A-disaccharide synthase (Burkholderia orbicola (strain MC0-3)).